The primary structure comprises 98 residues: Toxin ParE1 (98 aa).

Belongs to the RelE toxin family.

Toxic component of a type II toxin-antitoxin (TA) system. Its toxic effect is neutralized by coexpression with cognate antitoxin ParD1. This chain is Toxin ParE1 (parE1), found in Mycobacterium tuberculosis (strain CDC 1551 / Oshkosh).